The primary structure comprises 287 residues: 4-hydroxybenzoate octaprenyltransferase (287 aa).

Helical transmembrane passes span 41–61 (WPLL…GCAM), 89–109 (WEAV…ILPL), 133–153 (FFAI…PMAF), 158–178 (DTVP…SVAY), 202–224 (FGRF…YVWI), and 266–286 (HNNW…LLAG).

It belongs to the UbiA prenyltransferase family. Requires Mg(2+) as cofactor.

The protein resides in the cell inner membrane. The enzyme catalyses all-trans-octaprenyl diphosphate + 4-hydroxybenzoate = 4-hydroxy-3-(all-trans-octaprenyl)benzoate + diphosphate. It functions in the pathway cofactor biosynthesis; ubiquinone biosynthesis. Catalyzes the prenylation of para-hydroxybenzoate (PHB) with an all-trans polyprenyl group. Mediates the second step in the final reaction sequence of ubiquinone-8 (UQ-8) biosynthesis, which is the condensation of the polyisoprenoid side chain with PHB, generating the first membrane-bound Q intermediate 3-octaprenyl-4-hydroxybenzoate. The sequence is that of 4-hydroxybenzoate octaprenyltransferase from Burkholderia cenocepacia (strain HI2424).